We begin with the raw amino-acid sequence, 184 residues long: Protein DMP2 (184 aa).

4 helical membrane passes run 19–39, 45–65, 105–125, and 142–162; these read LIKL…PVLT, LLIN…SCCF, VGDF…SLLD, and IFLM…FTVF.

The protein belongs to the plant DMP1 protein family. Expressed constitutively in leaves, stems, flowers, siliques and roots.

It is found in the endoplasmic reticulum membrane. The protein resides in the vacuole membrane. Its function is as follows. Involved in membrane remodeling. In Arabidopsis thaliana (Mouse-ear cress), this protein is Protein DMP2.